A 1097-amino-acid polypeptide reads, in one-letter code: Kinesin-like protein KIF1C (1097 aa).

In terms of domain architecture, Kinesin motor spans 5-347 (SVKVAVRVRP…LRYADRTKQI (343 aa)). An ATP-binding site is contributed by 96-103 (GQTGAGKS). Ser-294 is subject to Phosphoserine. Positions 358–380 (NARLIRELQEEVARLRELLMAQG) form a coiled coil. The interval 397 to 434 (GGVLPAASSPPAPASPSSPPPHNGELEPSFSPSAEPQI) is disordered. Positions 404 to 418 (SSPPAPASPSSPPPH) are enriched in pro residues. Positions 437–478 (EEAMERLQETEKIIAELNETWEEKLRKTEALRMEREALLAEM) form a coiled coil. Ser-491 is modified (phosphoserine). Positions 520–587 (TRVGQVDVDI…LKSGNRIVMG (68 aa)) constitute an FHA domain. A coiled-coil region spans residues 630 to 671 (EQQGIDIKLEMEKRLQDLENQYRKEKEEADLLLEQQRLYADS). 2 positions are modified to phosphoserine: Ser-671 and Ser-673. Residues 824 to 868 (AEVEDLRAHIDKLTGILQEVKLQNSSKDRELQALRDRMLRMERVI) are a coiled coil. Disordered regions lie at residues 897-921 (EAVS…ERVS) and 946-1097 (QGLQ…GAAV). Ser-911 carries the phosphoserine modification. Positions 949-958 (QGSGGRGGGL) are enriched in gly residues. The segment covering 997 to 1015 (GPQPPEEVTAPPPPPNRRP) has biased composition (pro residues). Residues 1016-1026 (PSPRRPHRPRR) are compositionally biased toward basic residues. Residue Ser-1028 is modified to Phosphoserine. Arg-1036 carries the omega-N-methylarginine modification. Positions 1059–1077 (QPQPYPAQRPGPRYPPYTT) are enriched in pro residues. Thr-1077 bears the Phosphothreonine mark. Ser-1086 is modified (phosphoserine). Residues 1086-1097 (SAPDLKESGAAV) are compositionally biased toward basic and acidic residues.

The protein belongs to the TRAFAC class myosin-kinesin ATPase superfamily. Kinesin family. Unc-104 subfamily.

It localises to the cytoplasm. The protein resides in the cytoskeleton. Functionally, probable motor protein. The chain is Kinesin-like protein KIF1C (Kif1c) from Rattus norvegicus (Rat).